Consider the following 635-residue polypeptide: Extracellular metalloproteinase 9 (635 aa).

Positions 1 to 19 (MHGLLLAAGLLTLPLRALA) are cleaved as a signal peptide. The propeptide occupies 20 to 246 (HPGHQSTSIL…IHGVTDYVAD (227 aa)). A glycan (N-linked (GlcNAc...) asparagine) is linked at Asn-274. The segment at 279 to 307 (TWHSDGNTRYPTTRGNNGIAQDNPSGGTG) is disordered. Asn-413 carries an N-linked (GlcNAc...) asparagine glycan. Residue His-430 participates in Zn(2+) binding. The active site involves Glu-431. His-434 is a binding site for Zn(2+). The N-linked (GlcNAc...) asparagine glycan is linked to Asn-475.

The protein belongs to the peptidase M36 family. Requires Zn(2+) as cofactor.

The protein resides in the secreted. In terms of biological role, secreted metalloproteinase that allows assimilation of proteinaceous substrates. The chain is Extracellular metalloproteinase 9 (MEP9) from Uncinocarpus reesii (strain UAMH 1704).